The chain runs to 154 residues: Spermatogenesis-associated protein 19, mitochondrial (154 aa).

The N-terminal 24 residues, 1 to 24 (MIITTWIMYIFARKTVGLPFPPRV), are a transit peptide targeting the mitochondrion. 2 positions are modified to phosphoserine: S26 and S116.

Expressed specifically in adult testis (at protein level).

The protein localises to the mitochondrion outer membrane. The protein resides in the mitochondrion. It localises to the cell projection. Its subcellular location is the cilium. It is found in the flagellum. Essential for sperm motility and male fertility. Plays an important role in sperm motility by regulating the organization and function of the mitochondria and is also required for correct sperm midpiece assembly. This Mus musculus (Mouse) protein is Spermatogenesis-associated protein 19, mitochondrial (Spata19).